A 358-amino-acid chain; its full sequence is Glyoxylate/succinic semialdehyde reductase 2, chloroplastic (358 aa).

A chloroplast-targeting transit peptide spans 1 to 44; sequence MPLVSLSFASSSSKAMALCSICPRIPLRFRPKPISPFLSKPQIC. NADP(+) contacts are provided by residues 70 to 84 and T161; that span reads GFLGMGIMGSPMAQN. K236 is a catalytic residue. NADP(+) is bound at residue K304.

This sequence belongs to the HIBADH-related family. NP60 subfamily.

It is found in the plastid. The protein localises to the chloroplast stroma. It catalyses the reaction glycolate + NADP(+) = glyoxylate + NADPH + H(+). It carries out the reaction 4-hydroxybutanoate + NADP(+) = succinate semialdehyde + NADPH + H(+). The ratio of NADPH/NADP(+) may regulate enzymatic activity. Its function is as follows. Catalyzes the NADPH-dependent reduction of glyoxylate to glycolate as well as succinic semialdehyde (SSA) to gamma-hydroxybutyrate in vitro. May function in redox homeostasis and play a role in oxidative stress tolerance by detoxifying glyoxylate and SSA generated in glycolate metabolism and GABA metabolism, respectively. This is Glyoxylate/succinic semialdehyde reductase 2, chloroplastic (GLYR2) from Arabidopsis thaliana (Mouse-ear cress).